Here is a 147-residue protein sequence, read N- to C-terminus: Hemoglobin subunit delta (147 aa).

In terms of domain architecture, Globin spans 3–147 (HLTPEEKTAV…VANALAHKYH (145 aa)). Serine 51 bears the Phosphoserine mark. The heme b site is built by histidine 64 and histidine 93.

Belongs to the globin family. In terms of assembly, heterotetramer of two delta chains and two alpha chains. In terms of tissue distribution, red blood cells.

The sequence is that of Hemoglobin subunit delta (HBD) from Gorilla gorilla gorilla (Western lowland gorilla).